Consider the following 411-residue polypeptide: Na(+)-translocating NADH-quinone reductase subunit F (411 aa).

Residues 5–25 (VILALGIAAFTVIVLVLVAII) traverse the membrane as a helical segment. Residues 36–130 (GDITIGINDD…NMEVELPEEI (95 aa)) enclose the 2Fe-2S ferredoxin-type domain. [2Fe-2S] cluster-binding residues include cysteine 73, cysteine 79, cysteine 82, and cysteine 114. One can recognise an FAD-binding FR-type domain in the interval 133–273 (VKKWECTVIS…SGPFGEFFAK (141 aa)).

The protein belongs to the NqrF family. Composed of six subunits; NqrA, NqrB, NqrC, NqrD, NqrE and NqrF. [2Fe-2S] cluster is required as a cofactor. FAD serves as cofactor.

The protein resides in the cell inner membrane. The enzyme catalyses a ubiquinone + n Na(+)(in) + NADH + H(+) = a ubiquinol + n Na(+)(out) + NAD(+). Functionally, NQR complex catalyzes the reduction of ubiquinone-1 to ubiquinol by two successive reactions, coupled with the transport of Na(+) ions from the cytoplasm to the periplasm. The first step is catalyzed by NqrF, which accepts electrons from NADH and reduces ubiquinone-1 to ubisemiquinone by a one-electron transfer pathway. The protein is Na(+)-translocating NADH-quinone reductase subunit F of Haemophilus influenzae (strain PittEE).